Reading from the N-terminus, the 253-residue chain is uncharacterized protein (253 aa).

7 to 14 provides a ligand contact to ATP; it reads GKGGVGKT.

It to M.jannaschii MJ0084 and MJ0823.

This is an uncharacterized protein from Methanocaldococcus jannaschii (strain ATCC 43067 / DSM 2661 / JAL-1 / JCM 10045 / NBRC 100440) (Methanococcus jannaschii).